The chain runs to 243 residues: Small ribosomal subunit protein uS3 (243 aa).

The region spanning 39 to 110 (IRVFIQKKYG…QVRINVVEIE (72 aa)) is the KH type-2 domain. Positions 216–243 (QPLPVGASPRRKGNRRPQQFEDRSNDGK) are disordered. Residues 233-243 (QQFEDRSNDGK) show a composition bias toward basic and acidic residues.

It belongs to the universal ribosomal protein uS3 family. As to quaternary structure, part of the 30S ribosomal subunit. Forms a tight complex with proteins S10 and S14.

Functionally, binds the lower part of the 30S subunit head. Binds mRNA in the 70S ribosome, positioning it for translation. The polypeptide is Small ribosomal subunit protein uS3 (Prochlorococcus marinus (strain SARG / CCMP1375 / SS120)).